Reading from the N-terminus, the 318-residue chain is MARKKIALVGAGNIGGTLAHLIGLKELGDVVLFDIAEGTPQGKALDIAESTPIEGVDASYSGSNDYAAIKDADVVIVTAGVPRKPGMSRDDLIGINAKVMSAVGQGIRANCPNAFVICITNPLDAMVWVLREVSGLPHNKVVGMAGVLDSARFRYFLSEEFNVSVKDVNAFVLGGHGDTMVPLPRYSTVAGIPLPDLVKMGWTTQEKLDQIIQRTRDGGAEIVGLLKTGSAFYAPAAAAVQMAEAYLKDQKRVLPCAAWVEGQYGLDGIYVGVPTIIGAGGIEKVIEIELNADEKAAFAKSVDSVRGLIAASKELMPK.

NAD(+) contacts are provided by residues 10 to 15 (GAGNIG) and D34. Residues R83 and R89 each contribute to the substrate site. Residues N96 and 119–121 (ITN) contribute to the NAD(+) site. Substrate contacts are provided by N121 and R152. Residue H176 is the Proton acceptor of the active site.

The protein belongs to the LDH/MDH superfamily. MDH type 3 family.

The enzyme catalyses (S)-malate + NAD(+) = oxaloacetate + NADH + H(+). Catalyzes the reversible oxidation of malate to oxaloacetate. The polypeptide is Malate dehydrogenase (Rhodospirillum rubrum (strain ATCC 11170 / ATH 1.1.1 / DSM 467 / LMG 4362 / NCIMB 8255 / S1)).